The primary structure comprises 311 residues: MGLHSELKLAVPWGHIALKVWGSQKNPPVLCLHGWLDNANSFDRLIPLLPQDFCYMAMDFGGHGLSSHYNPGLPYYQQNFVSEVRRVATAFKWNQFTLLGHSFGGCVGGTFACMFPEMVDKLILLDSTPFFLDSNEMENILTYRRRNIEHTLQVEASQKKSLRAVSPEEMLQGFLNNNSHLDKDCGELILQRGTTKVDAGLVLNRDRRISWPENSFDFVSKEMFVHSAKSLQASVLMIKALQGYYDVRRANDADKAPMHFMVDTLRSTLKERFQFVEVPGNHYIHMNKPQVVAGVVGPFLQGLQRMTSARL.

Residues Pro27 to Ser227 form the AB hydrolase-1 domain. Ser102 is a catalytic residue. Residue Ser210 is modified to Phosphoserine.

It belongs to the AB hydrolase superfamily. In terms of tissue distribution, ubiquitous. High protein expression in skeletal and cardiac muscle.

It is found in the cytoplasm. The protein localises to the perinuclear region. It localises to the peroxisome. Probable serine hydrolase. May be related to cell muscle hypertrophy. This is Serine hydrolase-like protein (Serhl) from Mus musculus (Mouse).